Here is a 295-residue protein sequence, read N- to C-terminus: Small ribosomal subunit biogenesis GTPase RsgA (295 aa).

In terms of domain architecture, CP-type G spans 65–223; the sequence is KNQLVRPPVA…VLDTPGFTAL (159 aa). GTP contacts are provided by residues 114 to 117 and 165 to 173; these read NKVD and GPSGVGKSS. Zn(2+) is bound by residues cysteine 246, cysteine 251, histidine 253, and cysteine 259.

This sequence belongs to the TRAFAC class YlqF/YawG GTPase family. RsgA subfamily. In terms of assembly, monomer. Associates with 30S ribosomal subunit, binds 16S rRNA. Zn(2+) serves as cofactor.

It is found in the cytoplasm. Its function is as follows. One of several proteins that assist in the late maturation steps of the functional core of the 30S ribosomal subunit. Helps release RbfA from mature subunits. May play a role in the assembly of ribosomal proteins into the subunit. Circularly permuted GTPase that catalyzes slow GTP hydrolysis, GTPase activity is stimulated by the 30S ribosomal subunit. The chain is Small ribosomal subunit biogenesis GTPase RsgA from Caldanaerobacter subterraneus subsp. tengcongensis (strain DSM 15242 / JCM 11007 / NBRC 100824 / MB4) (Thermoanaerobacter tengcongensis).